The sequence spans 956 residues: uncharacterized protein (956 aa).

One can recognise a Fibronectin type-III domain in the interval Pro-40 to Ala-141. Disordered regions lie at residues Arg-152 to Leu-173 and Asn-488 to His-600. 2 stretches are compositionally biased toward polar residues: residues Asn-153–Asn-165 and Asn-488–Gly-523. Thr-154 carries the phosphothreonine modification. 2 positions are modified to phosphoserine: Ser-501 and Ser-520. The segment covering Ser-524–Ala-543 has biased composition (low complexity). The segment covering Val-552–Pro-563 has biased composition (polar residues). Residues Ser-564–Asp-574 show a composition bias toward low complexity. Positions Arg-578 to Ser-599 are enriched in polar residues. A phosphoserine mark is found at Ser-802, Ser-842, and Ser-895. Residues Val-875–Ser-956 are disordered. Residues Ser-895–Ser-904 are compositionally biased toward low complexity.

This is an uncharacterized protein from Saccharomyces cerevisiae (strain ATCC 204508 / S288c) (Baker's yeast).